The sequence spans 295 residues: Probable aspartoacylase (295 aa).

His16 and Glu19 together coordinate Zn(2+). Residues Arg58 and 65–66 (NR) contribute to the substrate site. Residue His107 participates in Zn(2+) binding. The substrate site is built by Glu166 and Tyr277.

This sequence belongs to the AspA/AstE family. Aspartoacylase subfamily. It depends on Zn(2+) as a cofactor.

It carries out the reaction an N-acyl-L-aspartate + H2O = a carboxylate + L-aspartate. This is Probable aspartoacylase from Acaryochloris marina (strain MBIC 11017).